The sequence spans 121 residues: Ribonuclease P protein component (121 aa).

It belongs to the RnpA family. Consists of a catalytic RNA component (M1 or rnpB) and a protein subunit.

It carries out the reaction Endonucleolytic cleavage of RNA, removing 5'-extranucleotides from tRNA precursor.. RNaseP catalyzes the removal of the 5'-leader sequence from pre-tRNA to produce the mature 5'-terminus. It can also cleave other RNA substrates such as 4.5S RNA. The protein component plays an auxiliary but essential role in vivo by binding to the 5'-leader sequence and broadening the substrate specificity of the ribozyme. The chain is Ribonuclease P protein component from Alcanivorax borkumensis (strain ATCC 700651 / DSM 11573 / NCIMB 13689 / SK2).